The following is a 352-amino-acid chain: Alanine racemase (352 aa).

Lysine 33 serves as the catalytic Proton acceptor; specific for D-alanine. Lysine 33 is modified (N6-(pyridoxal phosphate)lysine). A substrate-binding site is contributed by arginine 129. Catalysis depends on tyrosine 250, which acts as the Proton acceptor; specific for L-alanine. Methionine 298 is a substrate binding site.

This sequence belongs to the alanine racemase family. Pyridoxal 5'-phosphate serves as cofactor.

The enzyme catalyses L-alanine = D-alanine. It participates in amino-acid biosynthesis; D-alanine biosynthesis; D-alanine from L-alanine: step 1/1. Catalyzes the interconversion of L-alanine and D-alanine. May also act on other amino acids. This chain is Alanine racemase (alr), found in Neisseria gonorrhoeae (strain ATCC 700825 / FA 1090).